The following is a 2144-amino-acid chain: Alpha-protein kinase 2 (2144 aa).

The region spanning 7–105 (PERRTLCFLS…ICCSASLEVQ (99 aa)) is the Ig-like 1 domain. Cysteines 33 and 98 form a disulfide. 11 disordered regions span residues 425–473 (ETAK…LQTM), 500–575 (SLAR…GAPG), 727–775 (EDNE…NVGS), 845–864 (QTQG…DGKS), 881–907 (EASE…TLPY), 1011–1065 (SCEA…PEGQ), 1316–1340 (DPVE…EMEM), 1471–1509 (GPGE…ETEV), 1565–1587 (CGNH…PKGN), 1629–1696 (ECES…GSGH), and 1720–1754 (ENSR…PCKA). Residues 500–511 (SLARERTDEKYP) are compositionally biased toward basic and acidic residues. Residues 853-864 (RSTDKRSQDGKS) show a composition bias toward basic and acidic residues. A compositionally biased stretch (polar residues) spans 897–906 (PPSTFSSTLP). A compositionally biased stretch (polar residues) spans 1574–1587 (DLTNTPCTSSPKGN). Composition is skewed to basic and acidic residues over residues 1631–1645 (ESEK…RDPC) and 1732–1754 (PKFE…PCKA). An Ig-like 2 domain is found at 1759–1847 (PVLLKRIQAE…GKVTAEFNLT (89 aa)). C1781 and C1831 are disulfide-bonded. The region spanning 1874–2106 (KEDVFNDSYF…YCKMLGLKSL (233 aa)) is the Alpha-type protein kinase domain. Residues 2109 to 2144 (NSQKPKKPIVGKGRVPTNATQVKTPESETPPAERKT) form a disordered region.

This sequence belongs to the protein kinase superfamily. Alpha-type protein kinase family. ALPK subfamily.

The protein resides in the basolateral cell membrane. It catalyses the reaction L-seryl-[protein] + ATP = O-phospho-L-seryl-[protein] + ADP + H(+). The catalysed reaction is L-threonyl-[protein] + ATP = O-phospho-L-threonyl-[protein] + ADP + H(+). Functionally, protein kinase that recognizes phosphorylation sites in which the surrounding peptides have an alpha-helical conformation. Regulates cardiac development and cardiomyocyte differentiation by negatively regulating Wnt/beta-catenin signaling. The sequence is that of Alpha-protein kinase 2 from Mus musculus (Mouse).